Reading from the N-terminus, the 161-residue chain is Ribosome maturation factor RimP (161 aa).

It belongs to the RimP family.

It localises to the cytoplasm. Functionally, required for maturation of 30S ribosomal subunits. The polypeptide is Ribosome maturation factor RimP (Myxococcus xanthus (strain DK1622)).